We begin with the raw amino-acid sequence, 360 residues long: MSRVYNFSAGPAAIPEEVLFTVRDELLDWHGIGMSIAEVSHRGEEFIGVAEEAERDLRELLAVPESYHILFLQGGSRLQFAMVPMNLLANHKKAVYIDSGVWSNLAIREAKNYCDPHLATNAKELNYTGIPDQATWDMPNEAAYFYYVDNETVNGIEFPFIPDTDLTLVCDMSSNLLSRPFDVSRYGLIFACAQKNMGLAGLTIVIVHDDLLKRSPLPTTPSYLQYALHAKERSFINTPPTFAWYLAGLIFKWVKNQGGVAVLAERNQRKAAKLYKFIDKSNFFDNPINPTYRSRMNVIFRLADEILNSLFLKEATENGLANLKGHRLLGGMRASIYNAMTEEGVDALINFMGQFEKRHG.

L-glutamate is bound at residue R42. Pyridoxal 5'-phosphate is bound by residues W102, T152, D171, and Q194. Residue K195 is modified to N6-(pyridoxal phosphate)lysine. 237-238 (NT) lines the pyridoxal 5'-phosphate pocket.

This sequence belongs to the class-V pyridoxal-phosphate-dependent aminotransferase family. SerC subfamily. In terms of assembly, homodimer. Pyridoxal 5'-phosphate is required as a cofactor.

It localises to the cytoplasm. It catalyses the reaction O-phospho-L-serine + 2-oxoglutarate = 3-phosphooxypyruvate + L-glutamate. It carries out the reaction 4-(phosphooxy)-L-threonine + 2-oxoglutarate = (R)-3-hydroxy-2-oxo-4-phosphooxybutanoate + L-glutamate. Its pathway is amino-acid biosynthesis; L-serine biosynthesis; L-serine from 3-phospho-D-glycerate: step 2/3. It participates in cofactor biosynthesis; pyridoxine 5'-phosphate biosynthesis; pyridoxine 5'-phosphate from D-erythrose 4-phosphate: step 3/5. In terms of biological role, catalyzes the reversible conversion of 3-phosphohydroxypyruvate to phosphoserine and of 3-hydroxy-2-oxo-4-phosphonooxybutanoate to phosphohydroxythreonine. The polypeptide is Phosphoserine aminotransferase (Coxiella burnetii (strain Dugway 5J108-111)).